A 30-amino-acid polypeptide reads, in one-letter code: Varv peptide H (30 aa).

The segment at residues 1-30 (GLPVCGETCFGGTCNTPGCSCETWPVCSRN) is a cross-link (cyclopeptide (Gly-Asn)). Cystine bridges form between Cys-5–Cys-19, Cys-9–Cys-21, and Cys-14–Cys-27.

This is a cyclic peptide.

Probably participates in a plant defense mechanism. The chain is Varv peptide H from Viola arvensis (European field pansy).